Consider the following 144-residue polypeptide: UPF0292 protein MA_4098 (144 aa).

The Toprim domain maps to 28 to 109 (GAVIIVEGKR…KPELQIRNKL (82 aa)). Mg(2+) contacts are provided by Glu-34, Asp-78, and Asp-80.

This sequence belongs to the UPF0292 family. Mg(2+) serves as cofactor.

The protein is UPF0292 protein MA_4098 of Methanosarcina acetivorans (strain ATCC 35395 / DSM 2834 / JCM 12185 / C2A).